The primary structure comprises 386 residues: Alcohol dehydrogenase-like 2 (386 aa).

8 residues coordinate Zn(2+): Cys51, Thr53, His74, Cys104, Cys107, Cys110, Cys118, and Cys183. An alcohol contacts are provided by Thr53 and His74. An NAD(+)-binding site is contributed by Thr53. Residues 208–213, Asp232, Lys237, 302–304, Phe329, and Arg379 each bind NAD(+); these read GLGAVG and LGM.

This sequence belongs to the zinc-containing alcohol dehydrogenase family. Class-III subfamily. In terms of assembly, homodimer. Zn(2+) serves as cofactor.

Its subcellular location is the cytoplasm. It carries out the reaction a primary alcohol + NAD(+) = an aldehyde + NADH + H(+). The enzyme catalyses a secondary alcohol + NAD(+) = a ketone + NADH + H(+). The sequence is that of Alcohol dehydrogenase-like 2 from Arabidopsis thaliana (Mouse-ear cress).